Here is a 306-residue protein sequence, read N- to C-terminus: uncharacterized protein (306 aa).

This is an uncharacterized protein from Escherichia coli (strain K12).